The sequence spans 201 residues: Recombination protein RecR (201 aa).

A C4-type zinc finger spans residues Cys-60 to Cys-75. Positions Lys-83–Pro-177 constitute a Toprim domain.

The protein belongs to the RecR family.

Functionally, may play a role in DNA repair. It seems to be involved in an RecBC-independent recombinational process of DNA repair. It may act with RecF and RecO. This Prochlorococcus marinus (strain MIT 9215) protein is Recombination protein RecR.